Consider the following 156-residue polypeptide: 2-C-methyl-D-erythritol 2,4-cyclodiphosphate synthase (156 aa).

A divalent metal cation contacts are provided by Asp8 and His10. Residues 8-10 (DVH) and 34-35 (HS) contribute to the 4-CDP-2-C-methyl-D-erythritol 2-phosphate site. A divalent metal cation is bound at residue His42. 4-CDP-2-C-methyl-D-erythritol 2-phosphate is bound by residues 56–58 (DIG), 61–65 (FPDTD), 100–106 (AQRPKMA), 132–135 (TTEE), and Phe139.

This sequence belongs to the IspF family. Homotrimer. A divalent metal cation is required as a cofactor.

The enzyme catalyses 4-CDP-2-C-methyl-D-erythritol 2-phosphate = 2-C-methyl-D-erythritol 2,4-cyclic diphosphate + CMP. It participates in isoprenoid biosynthesis; isopentenyl diphosphate biosynthesis via DXP pathway; isopentenyl diphosphate from 1-deoxy-D-xylulose 5-phosphate: step 4/6. Its function is as follows. Involved in the biosynthesis of isopentenyl diphosphate (IPP) and dimethylallyl diphosphate (DMAPP), two major building blocks of isoprenoid compounds. Catalyzes the conversion of 4-diphosphocytidyl-2-C-methyl-D-erythritol 2-phosphate (CDP-ME2P) to 2-C-methyl-D-erythritol 2,4-cyclodiphosphate (ME-CPP) with a corresponding release of cytidine 5-monophosphate (CMP). The protein is 2-C-methyl-D-erythritol 2,4-cyclodiphosphate synthase of Clostridium perfringens (strain ATCC 13124 / DSM 756 / JCM 1290 / NCIMB 6125 / NCTC 8237 / Type A).